The primary structure comprises 129 residues: Small ribosomal subunit protein uS11 (129 aa).

Belongs to the universal ribosomal protein uS11 family. Part of the 30S ribosomal subunit. Interacts with proteins S7 and S18. Binds to IF-3.

Located on the platform of the 30S subunit, it bridges several disparate RNA helices of the 16S rRNA. Forms part of the Shine-Dalgarno cleft in the 70S ribosome. The protein is Small ribosomal subunit protein uS11 of Escherichia fergusonii (strain ATCC 35469 / DSM 13698 / CCUG 18766 / IAM 14443 / JCM 21226 / LMG 7866 / NBRC 102419 / NCTC 12128 / CDC 0568-73).